Reading from the N-terminus, the 490-residue chain is Bifunctional protein GlmU (490 aa).

The interval 1 to 241 is pyrophosphorylase; it reads MSSPGDTAVL…SALVAGVNNR (241 aa). UDP-N-acetyl-alpha-D-glucosamine contacts are provided by residues 12–15, Lys26, Gln83, 88–89, 112–114, Gly151, Glu166, Asn181, and Asn239; these read LAAG, GT, and SGD. Asp114 lines the Mg(2+) pocket. Residue Asn239 participates in Mg(2+) binding. Residues 242–262 are linker; the sequence is VQLAQLGAELNRRIVAAHQLA. The interval 263-490 is N-acetyltransferase; the sequence is GVTVVDPATT…AGGRPAGEAE (228 aa). The UDP-N-acetyl-alpha-D-glucosamine site is built by Arg344 and Lys362. Catalysis depends on His374, which acts as the Proton acceptor. UDP-N-acetyl-alpha-D-glucosamine contacts are provided by Tyr377 and Asn388. Acetyl-CoA contacts are provided by residues Ala391, 397 to 398, Ser416, and Ala434; that span reads NY. The segment at 462-490 is disordered; it reads RRKRPGSAAARAAEAAEKAAGGRPAGEAE. A compositionally biased stretch (low complexity) spans 467–490; it reads GSAAARAAEAAEKAAGGRPAGEAE.

In the N-terminal section; belongs to the N-acetylglucosamine-1-phosphate uridyltransferase family. This sequence in the C-terminal section; belongs to the transferase hexapeptide repeat family. As to quaternary structure, homotrimer. Requires Mg(2+) as cofactor.

It is found in the cytoplasm. It catalyses the reaction alpha-D-glucosamine 1-phosphate + acetyl-CoA = N-acetyl-alpha-D-glucosamine 1-phosphate + CoA + H(+). The catalysed reaction is N-acetyl-alpha-D-glucosamine 1-phosphate + UTP + H(+) = UDP-N-acetyl-alpha-D-glucosamine + diphosphate. It functions in the pathway nucleotide-sugar biosynthesis; UDP-N-acetyl-alpha-D-glucosamine biosynthesis; N-acetyl-alpha-D-glucosamine 1-phosphate from alpha-D-glucosamine 6-phosphate (route II): step 2/2. It participates in nucleotide-sugar biosynthesis; UDP-N-acetyl-alpha-D-glucosamine biosynthesis; UDP-N-acetyl-alpha-D-glucosamine from N-acetyl-alpha-D-glucosamine 1-phosphate: step 1/1. The protein operates within bacterial outer membrane biogenesis; LPS lipid A biosynthesis. Catalyzes the last two sequential reactions in the de novo biosynthetic pathway for UDP-N-acetylglucosamine (UDP-GlcNAc). The C-terminal domain catalyzes the transfer of acetyl group from acetyl coenzyme A to glucosamine-1-phosphate (GlcN-1-P) to produce N-acetylglucosamine-1-phosphate (GlcNAc-1-P), which is converted into UDP-GlcNAc by the transfer of uridine 5-monophosphate (from uridine 5-triphosphate), a reaction catalyzed by the N-terminal domain. The chain is Bifunctional protein GlmU from Mycobacterium avium (strain 104).